Consider the following 222-residue polypeptide: Charged multivesicular body protein 4a (222 aa).

Disordered regions lie at residues 1-21 (MSGL…TPEE) and 177-222 (LLHV…EWVS). Residues 1–116 (MSGLGRLFGR…ELAAQGLKKA (116 aa)) are interaction with phosphoinosides. Residues 1-150 (MSGLGRLFGR…QISDAISRPV (150 aa)) form an intramolecular interaction with C-terminus region. 2 coiled-coil regions span residues 20-105 (EEAI…VLRT) and 155-180 (DVDE…LLHV). The intramolecular interaction with N-terminus stretch occupies residues 151-222 (GFGDDVDEDE…ELKQLAEWVS (72 aa)). At serine 196 the chain carries Phosphoserine.

It belongs to the SNF7 family. Probable core component of the endosomal sorting required for transport complex III (ESCRT-III). ESCRT-III components are thought to multimerize to form a flat lattice on the perimeter membrane of the endosome. Several assembly forms of ESCRT-III may exist that interact and act sequentially. Self-associates; overexpression leads to the assembly of filaments that curve and associate to create circular rings. Interacts with CHMP2A. Interacts with CHMP3; the interaction requires the release of CHMP4A autoinhibition. Interacts with CHMP4B. Interacts with CHMP4C. Interacts with CHMP6. Interacts with VPS4A. Interacts with PDCD6IP; the interaction is direct.

The protein resides in the cytoplasmic vesicle membrane. Its subcellular location is the late endosome membrane. In terms of biological role, probable core component of the endosomal sorting required for transport complex III (ESCRT-III) which is involved in multivesicular bodies (MVBs) formation and sorting of endosomal cargo proteins into MVBs. MVBs contain intraluminal vesicles (ILVs) that are generated by invagination and scission from the limiting membrane of the endosome and mostly are delivered to lysosomes enabling degradation of membrane proteins, such as stimulated growth factor receptors, lysosomal enzymes and lipids. The MVB pathway appears to require the sequential function of ESCRT-O, -I,-II and -III complexes. ESCRT-III proteins mostly dissociate from the invaginating membrane before the ILV is released. The ESCRT machinery also functions in topologically equivalent membrane fission events, such as the terminal stages of cytokinesis and the budding of enveloped viruses (lentiviruses). ESCRT-III proteins are believed to mediate the necessary vesicle extrusion and/or membrane fission activities, possibly in conjunction with the AAA ATPase VPS4. When overexpressed, membrane-assembled circular arrays of CHMP4A filaments can promote or stabilize negative curvature and outward budding. CHMP4A/B/C are required for the exosomal release of SDCBP, CD63 and syndecan. The sequence is that of Charged multivesicular body protein 4a (CHMP4A) from Bos taurus (Bovine).